Here is a 115-residue protein sequence, read N- to C-terminus: MRLNHKQGEAGEDAALAFLQSQGCTLLARNWHCAYGEIDLIVKNGGMILFVEVKYRKNRQFGGVAYSISPSKLLKLQRSVEYYLQQNRLTNVPCRLDAVLIEGSRPPEWIQNITG.

It belongs to the UPF0102 family.

The polypeptide is UPF0102 protein NMB2089 (Neisseria meningitidis serogroup B (strain ATCC BAA-335 / MC58)).